A 38-amino-acid chain; its full sequence is Defensin D7 (38 aa).

The protein belongs to the DEFL family. Group IV subfamily. Distributed in the epidermal cell layer of leaves and in the subepidermal layer region of stems. Not in roots.

It localises to the secreted. The protein resides in the cell wall. Antimicrobial peptide. Active against Fusarium spp., Gram-positive and Gram-negative bacterial pathogens. The sequence is that of Defensin D7 from Spinacia oleracea (Spinach).